Consider the following 304-residue polypeptide: Probable 5-dehydro-4-deoxyglucarate dehydratase (304 aa).

It belongs to the DapA family.

The catalysed reaction is 5-dehydro-4-deoxy-D-glucarate + H(+) = 2,5-dioxopentanoate + CO2 + H2O. It participates in carbohydrate acid metabolism; D-glucarate degradation; 2,5-dioxopentanoate from D-glucarate: step 2/2. The sequence is that of Probable 5-dehydro-4-deoxyglucarate dehydratase from Rhodococcus opacus (strain B4).